The following is a 378-amino-acid chain: 2-aminoethylphosphonate--pyruvate transaminase 1 (378 aa).

Lys194 carries the N6-(pyridoxal phosphate)lysine modification.

Belongs to the class-V pyridoxal-phosphate-dependent aminotransferase family. PhnW subfamily. Homodimer. Pyridoxal 5'-phosphate is required as a cofactor.

The enzyme catalyses (2-aminoethyl)phosphonate + pyruvate = phosphonoacetaldehyde + L-alanine. In terms of biological role, involved in phosphonate degradation. This is 2-aminoethylphosphonate--pyruvate transaminase 1 from Cupriavidus pinatubonensis (strain JMP 134 / LMG 1197) (Cupriavidus necator (strain JMP 134)).